Reading from the N-terminus, the 1218-residue chain is Thrombospondin type 1 domain-containing protein (1218 aa).

Disordered regions lie at residues 82 to 101 (SAGF…PCSS), 189 to 240 (SLEE…SRTR), 298 to 383 (HTAN…VNGL), and 445 to 471 (GGKS…SHRG). Over residues 201–210 (GYEEERERRS) the composition is skewed to basic and acidic residues. The segment covering 315-375 (SSRFTSKASS…SSPLSSSPDS (61 aa)) has biased composition (low complexity). Residues 638-704 (SCITGPWSEW…RRKCNLGACP (67 aa)) enclose the TSP type-1 domain. Residues 886–906 (GVSHLWISLCAGAVAAVVFLV) form a helical membrane-spanning segment. Positions 1129–1153 (RRRARRGRREGDSGEGGDCGEARKA) are disordered.

In terms of assembly, component of a complex, at least composed of cysteine repeat modular protein A (CRMPa), cysteine repeat modular protein B (CRMPb), micronemal protein 15 (MIC15) and thrombospondin type 1 domain-containing protein (TSP1).

Its subcellular location is the membrane. In terms of biological role, required for rhoptry secretion. Plays a role in host cell invasion. The sequence is that of Thrombospondin type 1 domain-containing protein from Toxoplasma gondii.